Consider the following 437-residue polypeptide: Type II methyltransferase M.HgiCII (437 aa).

One can recognise an SAM-dependent MTase C5-type domain in the interval 4–431 (FRFIDLFAGI…KALPNDHLFE (428 aa)). Residue Cys75 is part of the active site.

The protein belongs to the class I-like SAM-binding methyltransferase superfamily. C5-methyltransferase family.

The enzyme catalyses a 2'-deoxycytidine in DNA + S-adenosyl-L-methionine = a 5-methyl-2'-deoxycytidine in DNA + S-adenosyl-L-homocysteine + H(+). Its function is as follows. A methylase that recognizes the double-stranded sequence 5'-GGWCC-3', methylates C-? on both strands and protects the DNA from cleavage by the HgiCII endonuclease. In Herpetosiphon aurantiacus (Herpetosiphon giganteus), this protein is Type II methyltransferase M.HgiCII.